A 700-amino-acid polypeptide reads, in one-letter code: Calpain-2 catalytic subunit (700 aa).

A2 is modified (N-acetylalanine). Residues A2–G19 constitute a propeptide, anchors to the small subunit. One can recognise a Calpain catalytic domain in the interval L45–T344. I89, G91, and D96 together coordinate Ca(2+). The active site involves C105. Ca(2+)-binding residues include E175, Q229, and K230. Catalysis depends on residues H262 and N286. Ca(2+) is bound by residues E292, D299, and E323. The domain III stretch occupies residues P345–D514. A linker region spans residues E515–D529. The segment at I530–L700 is domain IV. 16 residues coordinate Ca(2+): A542, D545, E547, E552, D585, D587, S589, K591, E596, D615, D617, S619, T621, E626, D658, and N661. EF-hand domains are found at residues F572–Q605 and T602–K637. The EF-hand 3 domain maps to V667 to L700.

This sequence belongs to the peptidase C2 family. As to quaternary structure, forms a heterodimer with a small (regulatory) subunit (CAPNS1). Interacts with CPEB3; this leads to cleavage of CPEB3. Interacts with PIDD1 alternative open reading frame protein altPIDD1. Ca(2+) serves as cofactor. As to expression, ubiquitous.

The protein localises to the cytoplasm. The protein resides in the cell membrane. The enzyme catalyses Broad endopeptidase specificity.. Activated by 200-1000 micromolar concentrations of calcium and inhibited by calpastatin. Its function is as follows. Calcium-regulated non-lysosomal thiol-protease which catalyzes limited proteolysis of substrates involved in cytoskeletal remodeling and signal transduction. Proteolytically cleaves MYOC at 'Arg-226'. Proteolytically cleaves CPEB3 following neuronal stimulation which abolishes CPEB3 translational repressor activity, leading to translation of CPEB3 target mRNAs. The protein is Calpain-2 catalytic subunit (CAPN2) of Homo sapiens (Human).